Consider the following 104-residue polypeptide: L-rhamnose mutarotase (104 aa).

A substrate-binding site is contributed by Y18. Residue H22 is the Proton donor of the active site. Substrate-binding positions include Y41 and 76–77; that span reads WW.

It belongs to the rhamnose mutarotase family. Homodimer.

Its subcellular location is the cytoplasm. The enzyme catalyses alpha-L-rhamnose = beta-L-rhamnose. It functions in the pathway carbohydrate metabolism; L-rhamnose metabolism. Functionally, involved in the anomeric conversion of L-rhamnose. This Phocaeicola vulgatus (strain ATCC 8482 / DSM 1447 / JCM 5826 / CCUG 4940 / NBRC 14291 / NCTC 11154) (Bacteroides vulgatus) protein is L-rhamnose mutarotase.